A 167-amino-acid chain; its full sequence is Small ribosomal subunit protein uS5 (167 aa).

The S5 DRBM domain maps to 11–74 (LQEKLIAVNR…EKARRAMINV (64 aa)).

This sequence belongs to the universal ribosomal protein uS5 family. As to quaternary structure, part of the 30S ribosomal subunit. Contacts proteins S4 and S8.

Functionally, with S4 and S12 plays an important role in translational accuracy. In terms of biological role, located at the back of the 30S subunit body where it stabilizes the conformation of the head with respect to the body. The sequence is that of Small ribosomal subunit protein uS5 from Yersinia enterocolitica serotype O:8 / biotype 1B (strain NCTC 13174 / 8081).